Here is a 358-residue protein sequence, read N- to C-terminus: Transcription factor bHLH67 (358 aa).

The tract at residues 125-176 is disordered; that stretch reads NMTLPSSTSSPLSAHSRRKRKINHLLPQEMTREKRKRRKTKPSKNNEEIENQ. The span at 127 to 137 shows a compositional bias: low complexity; the sequence is TLPSSTSSPLS. Residues 157–166 show a composition bias toward basic residues; the sequence is EKRKRRKTKP. The region spanning 175–226 is the bHLH domain; that stretch reads NQRINHIAVERNRRRQMNEHINSLRALLPPSYIQRGDQASIVGGAINYVKVL.

In terms of assembly, homodimer. In terms of tissue distribution, expressed constitutively in roots, leaves, stems, and flowers.

It localises to the nucleus. This is Transcription factor bHLH67 (BHLH67) from Arabidopsis thaliana (Mouse-ear cress).